We begin with the raw amino-acid sequence, 298 residues long: Ribosomal protein L11 methyltransferase (298 aa).

Thr-152, Gly-173, Asp-195, and Asn-234 together coordinate S-adenosyl-L-methionine.

Belongs to the methyltransferase superfamily. PrmA family.

It localises to the cytoplasm. It carries out the reaction L-lysyl-[protein] + 3 S-adenosyl-L-methionine = N(6),N(6),N(6)-trimethyl-L-lysyl-[protein] + 3 S-adenosyl-L-homocysteine + 3 H(+). Methylates ribosomal protein L11. The protein is Ribosomal protein L11 methyltransferase of Ralstonia pickettii (strain 12J).